A 443-amino-acid chain; its full sequence is Transcription factor E2F2 (443 aa).

The interval 1-22 (MLRAPRTLAPATAQPTKSLPAL) is disordered. Positions 67–107 (ATPHGPEGQIVRCAPAGRLPAKRKLDLEGIGRPTVPEFRTP) are cyclin A/CDK2 binding. A DNA-binding region spans residues 109–198 (GKCIRVDGLP…KNNIQWVGRE (90 aa)). A leucine-zipper region spans residues 157-178 (LNWAAEVLDVQKRRIYDITNVL). Residues 162–198 (EVLDVQKRRIYDITNVLEGIQLIRKKSKNNIQWVGRE) carry the DEF box motif. Residues 199 to 291 (LFEDPTRPSR…PDRAEENLQI (93 aa)) form a dimerization region. The disordered stretch occupies residues 306 to 341 (PEEGQEPDSPAKEALPSTSALSPIPDCAQPGCSTDS). Residues 361–443 (PPPPLPPAPS…SYDLGDLLIN (83 aa)) are transactivation. Positions 416–433 (DEYLWGMDEGEGISDLFD) are retinoblastoma protein binding.

This sequence belongs to the E2F/DP family. In terms of assembly, component of the DRTF1/E2F transcription factor complex. Forms heterodimers with DP family members. The E2F2 complex binds specifically hypophosphorylated retinoblastoma protein RB1. During the cell cycle, RB1 becomes phosphorylated in mid-to-late G1 phase, detaches from the DRTF1/E2F complex, rendering E2F transcriptionally active. Viral oncoproteins, notably E1A, T-antigen and HPV E7, are capable of sequestering RB protein, thus releasing the active complex. Binds EAPP. In terms of processing, phosphorylated by CDK2 and cyclin A-CDK2 in the S-phase.

It localises to the nucleus. Transcription activator that binds DNA cooperatively with DP proteins through the E2 recognition site, 5'-TTTC[CG]CGC-3' found in the promoter region of a number of genes whose products are involved in cell cycle regulation or in DNA replication. The DRTF1/E2F complex functions in the control of cell-cycle progression from g1 to s phase. E2F2 binds specifically to RB1 in a cell-cycle dependent manner. This chain is Transcription factor E2F2 (E2f2), found in Mus musculus (Mouse).